The sequence spans 207 residues: Cytochrome c biogenesis ATP-binding export protein CcmA (207 aa).

An ABC transporter domain is found at Leu-2 to Arg-204. Residue Gly-34–Thr-41 participates in ATP binding.

This sequence belongs to the ABC transporter superfamily. CcmA exporter (TC 3.A.1.107) family. As to quaternary structure, the complex is composed of two ATP-binding proteins (CcmA) and two transmembrane proteins (CcmB).

It is found in the cell membrane. It carries out the reaction heme b(in) + ATP + H2O = heme b(out) + ADP + phosphate + H(+). Functionally, part of the ABC transporter complex CcmAB involved in the biogenesis of c-type cytochromes; once thought to export heme, this seems not to be the case, but its exact role is uncertain. Responsible for energy coupling to the transport system. In Wolbachia pipientis wMel, this protein is Cytochrome c biogenesis ATP-binding export protein CcmA.